A 178-amino-acid polypeptide reads, in one-letter code: Inner membrane-spanning protein YciB (178 aa).

The next 6 membrane-spanning stretches (helical) occupy residues 1 to 21, 23 to 43, 51 to 71, 77 to 97, 120 to 140, and 150 to 170; these read MKIL…KMTG, IIIA…FTWF, MHLV…LLGD, WKPT…QFIG, LNLA…YVAF, and FKLF…GIYL.

This sequence belongs to the YciB family.

Its subcellular location is the cell inner membrane. Its function is as follows. Plays a role in cell envelope biogenesis, maintenance of cell envelope integrity and membrane homeostasis. This is Inner membrane-spanning protein YciB from Marinomonas sp. (strain MWYL1).